A 262-amino-acid polypeptide reads, in one-letter code: Type III pantothenate kinase (262 aa).

9–16 contributes to the ATP binding site; that stretch reads DAGNSRIK. Residues tyrosine 96 and 103–106 each bind substrate; that span reads GSDR. The Proton acceptor role is filled by aspartate 105. Threonine 129 is an ATP binding site. Residue threonine 189 participates in substrate binding.

The protein belongs to the type III pantothenate kinase family. In terms of assembly, homodimer. Requires NH4(+) as cofactor. K(+) is required as a cofactor.

Its subcellular location is the cytoplasm. It carries out the reaction (R)-pantothenate + ATP = (R)-4'-phosphopantothenate + ADP + H(+). Its pathway is cofactor biosynthesis; coenzyme A biosynthesis; CoA from (R)-pantothenate: step 1/5. Its function is as follows. Catalyzes the phosphorylation of pantothenate (Pan), the first step in CoA biosynthesis. The polypeptide is Type III pantothenate kinase (Burkholderia multivorans (strain ATCC 17616 / 249)).